A 205-amino-acid polypeptide reads, in one-letter code: Mitotic spindle assembly checkpoint protein MAD2A (205 aa).

Ala2 bears the N-acetylalanine mark. The HORMA domain maps to 14 to 197; the sequence is RGSAEIVAEF…TTIHKVNSMV (184 aa). Phosphoserine occurs at positions 130, 170, 185, and 195. A required for assuming the closed conformation and for interaction with CDC20 region spans residues 195-205; that stretch reads SMVAYKTPVND.

It belongs to the MAD2 family. Monomer and homodimer. Heterodimerizes with MAD2L1 in order to form a tetrameric MAD1L1-MAD2L1 core complex. In the closed and open conformation, interacts with MAD1L1. Formation of a heterotetrameric core complex containing two molecules each of MAD1L1 and of MAD2L1 promotes binding of another molecule of MAD2L1 to each MAD2L1, resulting in a heterohexamer. Interacts with MAD2L1BP. Interacts with ADAM17/TACE. Interacts with CDC20. Dimeric MAD2L1 in the closed conformation interacts with CDC20. Monomeric MAD2L1 in the open conformation does not interact with CDC20. CDC20 competes with MAD1L1 for MAD2L1 binding. In the closed conformation, interacts with BUB1B. Interacts with TTK. Interacts with TPR. Binds to UBD (via ubiquitin-like 1 domain) during mitosis. Interacts with isoform 1 and isoform 2 of NEK2. Interacts with HSF1; this interaction occurs in mitosis. Phosphorylated on multiple serine residues. The level of phosphorylation varies during the cell cycle and is highest during mitosis. Phosphorylation abolishes interaction with MAD1L1 and reduces interaction with CDC20. Phosphorylated by NEK2.

It localises to the nucleus. Its subcellular location is the chromosome. The protein localises to the centromere. The protein resides in the kinetochore. It is found in the cytoplasm. It localises to the cytoskeleton. Its subcellular location is the spindle pole. Component of the spindle-assembly checkpoint that prevents the onset of anaphase until all chromosomes are properly aligned at the metaphase plate. In the closed conformation (C-MAD2) forms a heterotetrameric complex with MAD1L1 at unattached kinetochores during prometaphase, and recruits an open conformation of MAD2L1 (O-MAD2) which then promotes the conversion of O-MAD2 to C-MAD2. Required for the execution of the mitotic checkpoint which monitors the process of kinetochore-spindle attachment and inhibits the activity of the anaphase promoting complex by sequestering CDC20 until all chromosomes are aligned at the metaphase plate. The sequence is that of Mitotic spindle assembly checkpoint protein MAD2A (Mad2l1) from Mus musculus (Mouse).